The following is a 486-amino-acid chain: Ribulose bisphosphate carboxylase large chain (486 aa).

Residues Asn-125 and Thr-175 each contribute to the substrate site. The Proton acceptor role is filled by Lys-177. Residue Lys-179 coordinates substrate. 3 residues coordinate Mg(2+): Lys-203, Asp-205, and Glu-206. Lys-203 carries the post-translational modification N6-carboxylysine. His-295 serves as the catalytic Proton acceptor. Substrate contacts are provided by Arg-296, His-328, and Ser-380.

Belongs to the RuBisCO large chain family. Type I subfamily. In terms of assembly, heterohexadecamer of 8 large chains and 8 small chains. Mg(2+) is required as a cofactor.

It catalyses the reaction 2 (2R)-3-phosphoglycerate + 2 H(+) = D-ribulose 1,5-bisphosphate + CO2 + H2O. The enzyme catalyses D-ribulose 1,5-bisphosphate + O2 = 2-phosphoglycolate + (2R)-3-phosphoglycerate + 2 H(+). In terms of biological role, ruBisCO catalyzes two reactions: the carboxylation of D-ribulose 1,5-bisphosphate, the primary event in carbon dioxide fixation, as well as the oxidative fragmentation of the pentose substrate. Both reactions occur simultaneously and in competition at the same active site. This Afipia carboxidovorans (strain ATCC 49405 / DSM 1227 / KCTC 32145 / OM5) (Oligotropha carboxidovorans) protein is Ribulose bisphosphate carboxylase large chain.